The sequence spans 445 residues: Phosphoglucosamine mutase (445 aa).

Residue S102 is the Phosphoserine intermediate of the active site. Mg(2+) contacts are provided by S102, D241, D243, and D245. Residue S102 is modified to Phosphoserine.

Belongs to the phosphohexose mutase family. Mg(2+) is required as a cofactor. Activated by phosphorylation.

The enzyme catalyses alpha-D-glucosamine 1-phosphate = D-glucosamine 6-phosphate. Functionally, catalyzes the conversion of glucosamine-6-phosphate to glucosamine-1-phosphate. This chain is Phosphoglucosamine mutase, found in Shewanella sp. (strain W3-18-1).